A 148-amino-acid chain; its full sequence is Small ribosomal subunit protein uS15 (148 aa).

A disordered region spans residues 1-23; it reads MRKSKEKGRSGSTRPPQLKKPEW.

This sequence belongs to the universal ribosomal protein uS15 family. In terms of assembly, part of the 30S ribosomal subunit.

This Thermofilum pendens (strain DSM 2475 / Hrk 5) protein is Small ribosomal subunit protein uS15.